A 339-amino-acid polypeptide reads, in one-letter code: Anthranilate phosphoribosyltransferase (339 aa).

5-phospho-alpha-D-ribose 1-diphosphate contacts are provided by residues glycine 79, 82-83 (GD), serine 87, 89-92 (NIST), 107-115 (KHGNRSISS), and serine 119. Glycine 79 contributes to the anthranilate binding site. Serine 91 is a binding site for Mg(2+). An anthranilate-binding site is contributed by asparagine 110. Residue arginine 165 coordinates anthranilate. Mg(2+) contacts are provided by aspartate 224 and glutamate 225.

It belongs to the anthranilate phosphoribosyltransferase family. In terms of assembly, homodimer. Mg(2+) is required as a cofactor.

It catalyses the reaction N-(5-phospho-beta-D-ribosyl)anthranilate + diphosphate = 5-phospho-alpha-D-ribose 1-diphosphate + anthranilate. It functions in the pathway amino-acid biosynthesis; L-tryptophan biosynthesis; L-tryptophan from chorismate: step 2/5. Functionally, catalyzes the transfer of the phosphoribosyl group of 5-phosphorylribose-1-pyrophosphate (PRPP) to anthranilate to yield N-(5'-phosphoribosyl)-anthranilate (PRA). In Listeria welshimeri serovar 6b (strain ATCC 35897 / DSM 20650 / CCUG 15529 / CIP 8149 / NCTC 11857 / SLCC 5334 / V8), this protein is Anthranilate phosphoribosyltransferase.